Here is a 427-residue protein sequence, read N- to C-terminus: Homeotic protein caudal (427 aa).

The disordered stretch occupies residues 104-273 (QLMQQHHHHH…QPQPGKTRTK (170 aa)). Over residues 116 to 129 (ASSSSASSGSSSSG) the composition is skewed to low complexity. The segment covering 145–164 (GVGGAGGGGGVGGATDGGPG) has biased composition (gly residues). The segment covering 183–195 (ITVSGSEISSPGA) has biased composition (polar residues). Positions 209–243 (HLSAVANNNNNNNNNNNSPSTHNNNNNNNSVSNNN) are enriched in low complexity. Position 245 is a phosphothreonine (Thr-245). The Antp-type hexapeptide motif lies at 252 to 257 (YFDWMK). The homeobox DNA-binding region spans 273–332 (KDKYRVVYTDFQRLELEKEYCTSRYITIRRKSELAQTLSLSERQVKIWFQNRRAKERKQN).

This sequence belongs to the Caudal homeobox family. In terms of tissue distribution, maternally localized in an anteroposterior gradient in the syncytial blastoderm. Also expressed in the pole cells. Zygotically localized in the primordia of the terminal abdominal segment, the hindgut and in the posterior midgut rudiment. Expressed in the gut, the gonads and parts of the genital disks of third instar larvae (at protein level).

Its subcellular location is the nucleus. Its function is as follows. Caudal (cad) is one of a number of transcription factors controlling segmentation of the embryo. Further transcriptional regulation via a 5' flanking region containing DNA replication-related elements (DRE) and by dref also regulated by trh and tgo via the CNS midline element. Alongside Bicoid (bcd), caudal forms concentration gradients down the anterior-posterior (A-P) axis providing positional information and subsequent induction of the gap genes. Plays a role in gastrulation/germ band extension, hindgut morphogenesis, positive regulation of cell proliferation, genital disk development and pattern formation. Acts as a key regulator of the Hox gene network and activates transcription via the downstream core promoter element (DPE) relative to the TATA box. Plays a role in the establishment of the hindgut and in the invagination of the hindgut primordium during gastrulation. These effects on the gut are achieved by acting combinatorially at the posterior of the embryo to activate transcription of different targets including fog, fkh and wg. Caudal is involved in regulation of proliferation through transactivation of the E2F gene. Postembryonically its function is mostly restricted to the intestine where it regulates antimicrobial peptide (AMP) levels preserving the normal gut flora. The chain is Homeotic protein caudal (cad) from Drosophila melanogaster (Fruit fly).